The following is a 73-amino-acid chain: UPF0270 protein PMI2817 (73 aa).

Belongs to the UPF0270 family.

This chain is UPF0270 protein PMI2817, found in Proteus mirabilis (strain HI4320).